The primary structure comprises 932 residues: Serine/threonine-protein kinase PknD (932 aa).

Residues tyrosine 4–leucine 291 enclose the Protein kinase domain. Residues isoleucine 10 to valine 18 and lysine 33 contribute to the ATP site. Aspartate 138 functions as the Proton acceptor in the catalytic mechanism.

The protein belongs to the protein kinase superfamily. Ser/Thr protein kinase family. Autophosphorylated on serine and threonine residues.

The catalysed reaction is L-seryl-[protein] + ATP = O-phospho-L-seryl-[protein] + ADP + H(+). The enzyme catalyses L-threonyl-[protein] + ATP = O-phospho-L-threonyl-[protein] + ADP + H(+). Together with the serine/threonine kinase Pkn1, may play a role in the specific interactions with host proteins during intracellular growth. This is Serine/threonine-protein kinase PknD from Chlamydia pneumoniae (Chlamydophila pneumoniae).